Here is an 818-residue protein sequence, read N- to C-terminus: Hillarin (818 aa).

One can recognise an LIM zinc-binding domain in the interval 9 to 76; sequence STCLRCSETV…SSHVPKSGPG (68 aa). The interval 97–141 is disordered; sequence FVNEQIRGTRSEVDGGPLGGSRQSTPNGYGSREISSPSQNDSDYK. Polar residues predominate over residues 117-137; sequence SRQSTPNGYGSREISSPSQND. A coiled-coil region spans residues 216–272; that stretch reads QDEWERELQRLTHKFEKELATSRRSRDEANILTMRHEQQKEDLEKNMTLRRSKKKES.

Belongs to the transglutaminase-like superfamily. Interacts with pnut. In terms of tissue distribution, localizes to the neuropil of the embryonic central nervous system (at protein level). Also detected in third instar larval brain (at protein level).

The protein localises to the cytoplasm. It is found in the cell cortex. The protein resides in the cleavage furrow. May act as a modulator of septin function during cytokinesis in the developing nervous system. This is Hillarin from Drosophila melanogaster (Fruit fly).